We begin with the raw amino-acid sequence, 206 residues long: Proteasome subunit beta type-2 (206 aa).

It belongs to the peptidase T1B family. The 26S proteasome consists of a 20S proteasome core and two 19S regulatory subunits. The 20S proteasome core is composed of 28 subunits that are arranged in four stacked rings, resulting in a barrel-shaped structure. The two end rings are each formed by seven alpha subunits, and the two central rings are each formed by seven beta subunits. The catalytic chamber with the active sites is on the inside of the barrel.

Its subcellular location is the cytoplasm. The protein localises to the nucleus. In terms of biological role, non-catalytic component of the proteasome, a multicatalytic proteinase complex which is characterized by its ability to cleave peptides with Arg, Phe, Tyr, Leu, and Glu adjacent to the leaving group at neutral or slightly basic pH. The proteasome has an ATP-dependent proteolytic activity. This chain is Proteasome subunit beta type-2 (PSB4), found in Trypanosoma brucei brucei.